Reading from the N-terminus, the 613-residue chain is YTH domain-containing family protein 2 (613 aa).

Disordered regions lie at residues 1 to 43, 215 to 234, and 244 to 396; these read MSAS…AQPR, SQVSTAPTMPPASMAPAKTA, and AKPQ…TVPA. The segment at 2-397 is localization to mRNA processing bodies (P-bodies); that stretch reads SASSLLEQRP…GMGGITVPAE (396 aa). Polar residues predominate over residues 16–27; it reads NKVQNGAVTQKD. 3 stretches are compositionally biased toward low complexity: residues 218 to 234, 295 to 307, and 345 to 360; these read STAPTMPPASMAPAKTA, NGQPPNQSSPQPG, and PPQLSQGPPASQPSQP. Residues 398–613 form an interaction with m6A-containing mRNAs region; the sequence is PHPVLEKLRM…RMQDRQGRVK (216 aa). The region spanning 423-557 is the YTH domain; sequence GRVFIIKSYS…DKARQVLKII (135 aa). Residues 429–431, D435, 445–446, N475, W499, and W504 contribute to the RNA site; these read KSY and WC. 2 stretches are compositionally biased toward basic and acidic residues: residues 578 to 587 and 604 to 613; these read EEEESVKKVE and RMQDRQGRVK. Residues 578 to 613 form a disordered region; sequence EEEESVKKVEVQGSDPYSNNSSRSHYRMQDRQGRVK.

The protein belongs to the YTHDF family. YTHDF2 subfamily.

Its subcellular location is the cytoplasm. It is found in the cytosol. The protein resides in the P-body. The protein localises to the stress granule. It localises to the nucleus. In terms of biological role, specifically recognizes and binds N6-methyladenosine (m6A)-containing RNAs, and regulates their stability. M6A is a modification present at internal sites of mRNAs and some non-coding RNAs and plays a role in mRNA stability and processing. Acts as a regulator of mRNA stability by promoting degradation of m6A-containing mRNAs. The YTHDF paralogs (ythdf1, ythdf2 and ythdf3) share m6A-containing mRNAs targets and act redundantly to mediate mRNA degradation and cellular differentiation. Plays a key role in maternal-to-zygotic transition during early embryonic development, the process during which maternally inherited mRNAs are degraded: acts by binding m6A-containing maternal mRNAs and promoting their degradation. More than one-third of maternal mRNAs can be modified by m6A. Binding to m6A-containing mRNAs results in mRNA degradation. Also involved in hematopoietic stem cells specification by binding to m6A-containing mRNAs, such as notch1a, and promote their degradation. The decreased Notch signaling following notch1a degradation promotes endothelial to hematopoietic transition. Promotes formation of phase-separated membraneless compartments, such as P-bodies or stress granules, by undergoing liquid-liquid phase separation upon binding to mRNAs containing multiple m6A-modified residues: polymethylated mRNAs act as a multivalent scaffold for the binding of YTHDF proteins, juxtaposing their disordered regions and thereby leading to phase separation. The resulting mRNA-YTHDF complexes then partition into different endogenous phase-separated membraneless compartments, such as P-bodies, stress granules or neuronal RNA granules. The sequence is that of YTH domain-containing family protein 2 from Danio rerio (Zebrafish).